The primary structure comprises 297 residues: MFNLKYFLVSSSLLFSVFSSPVFSNPKVLKVGAIPDQNQDVLDKRFNLFSKELSKQLDVEVKYIPVINYIAAVTGFRTKDLDLVWFGGLSGVQARLQTPNSIVIAQRDIDKEFKSVFVVNKNLELNSISNIKGLKKLKNLRFTFGSENSTSGRLMPEYFLNQAGVEIKHFKGKKAGFSGSHDATIALVNSGAFDAGALNKQVWENNLKNNPKRTSNLELFWITPEYVDYHWVAQGDLENRFGEGFTKELKSVILNLDIKQKSHKQILDMFNAKRFIKAESKQYKNIEEIGRKLNKIR.

The N-terminal stretch at Met1–Ser24 is a signal peptide.

It belongs to the phosphate/phosphite/phosphonate binding protein family. The complex may be composed of two ATP-binding proteins (PhnC1), two transmembrane proteins (PhnE1) and a solute-binding protein (PhnD1).

The protein resides in the periplasm. Its function is as follows. Probably part of the ABC transporter complex PhnD1C1E1. Binds strongly to inorganic phosphite and with very weak affinities to methylphosphonate (MPn) and phosphate. This chain is Probable ABC transporter phosphite binding protein PhnD1, found in Prochlorococcus marinus (strain MIT 9301).